A 306-amino-acid chain; its full sequence is Follistatin-related protein 1 (306 aa).

Positions 1 to 18 are cleaved as a signal peptide; the sequence is MWKRWLALSLVTIALVHG. The region spanning 28–51 is the Follistatin-like domain; that stretch reads ICANVFCGAGRECAVTEKGEPTCL. 5 disulfide bridges follow: Cys29–Cys40, Cys34–Cys50, Cys52–Cys82, Cys56–Cys75, and Cys64–Cys96. The Kazal-like domain maps to 46–98; that stretch reads GEPTCLCIEQCKPHKRPVCGSNGKTYLNHCELHRDACLTGSKIQVDYDGHCKE. A glycan (N-linked (GlcNAc...) asparagine) is linked at Asn142. The EF-hand 1 domain maps to 142-176; sequence NYSEILDKYFKSFDNGDSHLDSSEFLKFVEQNETA. Phosphoserine is present on Ser163. N-linked (GlcNAc...) asparagine glycosylation is found at Asn173 and Asn178. Positions 191 to 226 constitute an EF-hand 2 domain; that stretch reads LRSLCVDALIELSDENADWKLSFQEFLKCLNPSFNP. The region spanning 231–285 is the VWFC domain; it reads CALEDETYADGAETEVDCNRCVCSCGHWVCTAMTCDGKNQKGVQTHTEEEKTGYV.

As to quaternary structure, homodimer. Interacts with SCN10A. Interacts with DIP2A; DIP2A may act as a cell surface receptor for FSTL1. Interacts with BMP4. Interacts with CD14; this interaction promotes TL4-mediated signaling cascade. During central nervous system development, strongly expressed in the telencephalon, diencephalon, brainstem, limbic system and spinal cord. Widely expressed in all organs.

Its subcellular location is the secreted. Functionally, secreted glycoprotein that is involved in various physiological processes, such as angiogenesis, regulation of the immune response, cell proliferation and differentiation. Plays a role in the development of the central nervous system, skeletal system, lungs, and ureter. Promotes endothelial cell survival, migration and differentiation into network structures in an AKT-dependent manner. Also promotes survival of cardiac myocytes. Initiates various signaling cascades by activating different receptors on the cell surface such as DIP2A, TLR4 or BMP receptors. The chain is Follistatin-related protein 1 (Fstl1) from Mus musculus (Mouse).